A 258-amino-acid chain; its full sequence is 5'-nucleotidase SurE (258 aa).

D8, D9, S40, and N93 together coordinate a divalent metal cation.

It belongs to the SurE nucleotidase family. Requires a divalent metal cation as cofactor.

It localises to the cytoplasm. It carries out the reaction a ribonucleoside 5'-phosphate + H2O = a ribonucleoside + phosphate. Nucleotidase that shows phosphatase activity on nucleoside 5'-monophosphates. This Afipia carboxidovorans (strain ATCC 49405 / DSM 1227 / KCTC 32145 / OM5) (Oligotropha carboxidovorans) protein is 5'-nucleotidase SurE.